A 379-amino-acid chain; its full sequence is Citrate synthase (379 aa).

Active-site residues include histidine 225, histidine 265, and aspartate 316.

The protein belongs to the citrate synthase family. In terms of assembly, homodimer.

The enzyme catalyses oxaloacetate + acetyl-CoA + H2O = citrate + CoA + H(+). Its pathway is carbohydrate metabolism; tricarboxylic acid cycle; isocitrate from oxaloacetate: step 1/2. In terms of biological role, might regulate the synthesis and function of enzymes involved in later enzymatic steps of Krebs cycle. The sequence is that of Citrate synthase (citZ) from Haloferax volcanii (strain ATCC 29605 / DSM 3757 / JCM 8879 / NBRC 14742 / NCIMB 2012 / VKM B-1768 / DS2) (Halobacterium volcanii).